The sequence spans 178 residues: Large ribosomal subunit protein bL25 (178 aa).

Belongs to the bacterial ribosomal protein bL25 family. CTC subfamily. As to quaternary structure, part of the 50S ribosomal subunit; part of the 5S rRNA/L5/L18/L25 subcomplex. Contacts the 5S rRNA. Binds to the 5S rRNA independently of L5 and L18.

In terms of biological role, this is one of the proteins that binds to the 5S RNA in the ribosome where it forms part of the central protuberance. In Sulfurimonas denitrificans (strain ATCC 33889 / DSM 1251) (Thiomicrospira denitrificans (strain ATCC 33889 / DSM 1251)), this protein is Large ribosomal subunit protein bL25.